Here is a 195-residue protein sequence, read N- to C-terminus: Toxin protein Tse4 (195 aa).

A run of 4 helical transmembrane segments spans residues 20 to 40 (ASGG…ITLL), 116 to 136 (YVEL…LFGL), 140 to 160 (LLAA…GASM), and 171 to 191 (ALLM…AAYL).

It is found in the host membrane. The protein resides in the secreted. Functionally, toxin secreted by the H1 type VI (H1-T6SS) secretion system into the periplasm of recipient cells. The sequence is that of Toxin protein Tse4 from Pseudomonas aeruginosa (strain ATCC 15692 / DSM 22644 / CIP 104116 / JCM 14847 / LMG 12228 / 1C / PRS 101 / PAO1).